A 425-amino-acid polypeptide reads, in one-letter code: Adenosylhomocysteinase (425 aa).

Residues T60, D132, and E157 each coordinate substrate. Residue 158 to 160 (TTT) coordinates NAD(+). Residues K187 and D191 each coordinate substrate. NAD(+) is bound by residues N192, 221–226 (GYGWCG), E244, N279, 300–302 (SGH), and N347.

It belongs to the adenosylhomocysteinase family. NAD(+) is required as a cofactor.

Its subcellular location is the cytoplasm. The catalysed reaction is S-adenosyl-L-homocysteine + H2O = L-homocysteine + adenosine. The protein operates within amino-acid biosynthesis; L-homocysteine biosynthesis; L-homocysteine from S-adenosyl-L-homocysteine: step 1/1. Its function is as follows. May play a key role in the regulation of the intracellular concentration of adenosylhomocysteine. The protein is Adenosylhomocysteinase of Nostoc sp. (strain PCC 7120 / SAG 25.82 / UTEX 2576).